Reading from the N-terminus, the 265-residue chain is Putative 2-aminoethylphosphonate transport system permease protein PhnV (265 aa).

6 helical membrane-spanning segments follow: residues 13–33 (GVVASVLFIVFFFLPLAVILM), 69–89 (LTIGFCASLFALLCGVWAALA), 104–124 (VFYLPSAIPSVSVGLGILVAF), 131–151 (MNGTLWIVLTAHFVLISAFTF), 185–205 (LPLLMPWMMSALALSLSLSMG), and 233–253 (NIADGAALTIVLVAITLLLMM). An ABC transmembrane type-1 domain is found at 65–253 (LLASLTIGFC…LVAITLLLMM (189 aa)).

It belongs to the binding-protein-dependent transport system permease family.

Its subcellular location is the cell inner membrane. In terms of biological role, probably part of the PhnSTUV complex (TC 3.A.1.11.5) involved in 2-aminoethylphosphonate import. Probably responsible for the translocation of the substrate across the membrane. The polypeptide is Putative 2-aminoethylphosphonate transport system permease protein PhnV (phnV) (Salmonella choleraesuis (strain SC-B67)).